A 469-amino-acid chain; its full sequence is 3-isopropylmalate dehydratase large subunit (469 aa).

Cysteine 350, cysteine 410, and cysteine 413 together coordinate [4Fe-4S] cluster.

Belongs to the aconitase/IPM isomerase family. LeuC type 1 subfamily. As to quaternary structure, heterodimer of LeuC and LeuD. [4Fe-4S] cluster is required as a cofactor.

It catalyses the reaction (2R,3S)-3-isopropylmalate = (2S)-2-isopropylmalate. The protein operates within amino-acid biosynthesis; L-leucine biosynthesis; L-leucine from 3-methyl-2-oxobutanoate: step 2/4. Functionally, catalyzes the isomerization between 2-isopropylmalate and 3-isopropylmalate, via the formation of 2-isopropylmaleate. In Sinorhizobium fredii (strain NBRC 101917 / NGR234), this protein is 3-isopropylmalate dehydratase large subunit.